The sequence spans 884 residues: Alanine--tRNA ligase (884 aa).

The Zn(2+) site is built by His562, His566, Cys674, and His678.

It belongs to the class-II aminoacyl-tRNA synthetase family. Zn(2+) serves as cofactor.

The protein localises to the cytoplasm. It carries out the reaction tRNA(Ala) + L-alanine + ATP = L-alanyl-tRNA(Ala) + AMP + diphosphate. Catalyzes the attachment of alanine to tRNA(Ala) in a two-step reaction: alanine is first activated by ATP to form Ala-AMP and then transferred to the acceptor end of tRNA(Ala). Also edits incorrectly charged Ser-tRNA(Ala) and Gly-tRNA(Ala) via its editing domain. This Rhizobium etli (strain ATCC 51251 / DSM 11541 / JCM 21823 / NBRC 15573 / CFN 42) protein is Alanine--tRNA ligase.